We begin with the raw amino-acid sequence, 142 residues long: Probable transport accessory protein MmpS1 (142 aa).

Transmembrane regions (helical) follow at residues 8 to 28 (FWIP…VSRL) and 81 to 101 (VVNA…AVVA).

Belongs to the MmpS family.

It localises to the cell membrane. The sequence is that of Probable transport accessory protein MmpS1 (mmpS1) from Mycobacterium bovis (strain ATCC BAA-935 / AF2122/97).